We begin with the raw amino-acid sequence, 335 residues long: Eukaryotic translation initiation factor 3 subunit I (335 aa).

5 WD repeats span residues 8–47 (GHER…RLGT), 50–91 (GHQG…KTWD), 145–184 (CAES…LLFN), 189–228 (EPDL…VMKT), and 286–325 (GHFG…FDFT).

It belongs to the eIF-3 subunit I family. Component of the eukaryotic translation initiation factor 3 (eIF-3) complex.

It is found in the cytoplasm. Functionally, component of the eukaryotic translation initiation factor 3 (eIF-3) complex, which is involved in protein synthesis of a specialized repertoire of mRNAs and, together with other initiation factors, stimulates binding of mRNA and methionyl-tRNAi to the 40S ribosome. The eIF-3 complex specifically targets and initiates translation of a subset of mRNAs involved in cell proliferation. This Botryotinia fuckeliana (strain B05.10) (Noble rot fungus) protein is Eukaryotic translation initiation factor 3 subunit I (tif34).